The following is a 168-amino-acid chain: Phosphopantetheine adenylyltransferase (168 aa).

Thr10 is a binding site for substrate. ATP is bound by residues 10–11 and His18; that span reads TF. Substrate-binding residues include Lys42, Leu75, and Arg89. ATP contacts are provided by residues 90 to 92, Glu100, and 125 to 131; these read GVR and YTYVASS.

This sequence belongs to the bacterial CoaD family. In terms of assembly, homohexamer. Mg(2+) is required as a cofactor.

The protein localises to the cytoplasm. The catalysed reaction is (R)-4'-phosphopantetheine + ATP + H(+) = 3'-dephospho-CoA + diphosphate. Its pathway is cofactor biosynthesis; coenzyme A biosynthesis; CoA from (R)-pantothenate: step 4/5. Functionally, reversibly transfers an adenylyl group from ATP to 4'-phosphopantetheine, yielding dephospho-CoA (dPCoA) and pyrophosphate. The polypeptide is Phosphopantetheine adenylyltransferase (Prosthecochloris aestuarii (strain DSM 271 / SK 413)).